The following is a 324-amino-acid chain: Zinc finger C2HC domain-containing protein 1A (324 aa).

A C2HC/C3H-type 1 zinc finger spans residues 15-44 (ELLPCKICGRTFFPVALKKHGPICKKTATK). 4 residues coordinate Zn(2+): C19, C22, H34, and C38. Residues 43–83 (TKKRKTFDSSRQRAEGTDIPTVKPLKPRPEPPKKPSNWRRK) form a disordered region. A compositionally biased stretch (basic and acidic residues) spans 48–58 (TFDSSRQRAEG). The C2HC/C3H-type 2 zinc-finger motif lies at 118-147 (DYIQCPYCQRRFNENAADRHINFCKEQAAR). The Zn(2+) site is built by C122, C125, H137, and C141. Disordered regions lie at residues 150 to 224 (NKGK…LSPS) and 236 to 259 (NVKPRNSTPPSLARNPAPGVLTNK). Composition is skewed to low complexity over residues 176–187 (SNSPGTASSGSS) and 196–215 (GKTVVGVPSGKVSSSSSSLG). At S222 the chain carries Phosphoserine. T243 carries the phosphothreonine modification. At S291 the chain carries Phosphoserine.

Belongs to the ZC2HC1 family. The cofactor is Zn(2+).

The sequence is that of Zinc finger C2HC domain-containing protein 1A (ZC2HC1A) from Pongo abelii (Sumatran orangutan).